The primary structure comprises 292 residues: 1D-myo-inositol 2-acetamido-2-deoxy-alpha-D-glucopyranoside deacetylase (292 aa).

The Zn(2+) site is built by His-12, Asp-15, and His-147.

The protein belongs to the MshB deacetylase family. Zn(2+) is required as a cofactor.

It carries out the reaction 1D-myo-inositol 2-acetamido-2-deoxy-alpha-D-glucopyranoside + H2O = 1D-myo-inositol 2-amino-2-deoxy-alpha-D-glucopyranoside + acetate. Functionally, catalyzes the deacetylation of 1D-myo-inositol 2-acetamido-2-deoxy-alpha-D-glucopyranoside (GlcNAc-Ins) in the mycothiol biosynthesis pathway. In Rhodococcus opacus (strain B4), this protein is 1D-myo-inositol 2-acetamido-2-deoxy-alpha-D-glucopyranoside deacetylase.